We begin with the raw amino-acid sequence, 473 residues long: Presenilin-B (473 aa).

Residues 1-141 are disordered; it reads MSSDNNNDPF…PLLNKKEKDD (141 aa). The Cytoplasmic segment spans residues 1–164; it reads MSSDNNNDPF…DDEVSLQDFS (164 aa). Residues 22 to 46 show a composition bias toward polar residues; sequence RVSTTTSPNRQSINSSPKQSSPKST. The span at 54 to 72 shows a compositional bias: low complexity; it reads NIILDLNDNNNDNNNTNNY. A compositionally biased stretch (basic and acidic residues) spans 79-89; the sequence is VDNKNKFENKD. The chain crosses the membrane as a helical span at residues 165 to 185; that stretch reads SMIVSIIIPVSITMMAVVFFV. Topologically, residues 186–224 are lumenal; it reads KYLNNQTLYASTLSYTIAGGSSGGGSGADSITGNSFVDS. The N-linked (GlcNAc...) asparagine glycan is linked to Asn190. The chain crosses the membrane as a helical span at residues 225–245; sequence LIVAGIVLGMIIVTTVAFVLL. Residues 246-252 are Cytoplasmic-facing; the sequence is YKYRCLK. A helical membrane pass occupies residues 253-273; the sequence is ILYGWLFLSVGMMLGSFGTTF. Residues 274-286 are Lumenal-facing; that stretch reads FQAMLSAANLPLD. The chain crosses the membrane as a helical span at residues 287–307; sequence YITFAFLIFNFTVCGIIGVFW. A topological domain (cytoplasmic) is located at residue Tyr308. The helical transmembrane segment at 309–329 threads the bilayer; the sequence is AHQYVNQLYLVIISVLMAISL. The Lumenal portion of the chain corresponds to 330–334; sequence TRLPQ. The chain crosses the membrane as a helical span at residues 335 to 355; it reads WTIFTLLVIVAIYDLFAVLCP. Asp348 is an active-site residue. Residues 356–389 are Cytoplasmic-facing; the sequence is RGPLKVLVELSQERNENIPALVYETGKGSDSNLK. Residues 390 to 410 traverse the membrane as a helical segment; it reads LGLGDFIFYSLLISRAALVHM. The active site involves Asp394. The Lumenal segment spans residues 411–413; the sequence is SCV. Residues 414–434 form a helical membrane-spanning segment; sequence FSTFIAILTGLFLTLLCLAIF. Topologically, residues 435 to 442 are cytoplasmic; that stretch reads KKALPALP. A PAL motif is present at residues 439–441; that stretch reads PAL. An intramembrane region (helical) is located at residues 443 to 463; the sequence is ISIFLGILFYYLSNNFLTPFI. Residues 464–473 lie on the Cytoplasmic side of the membrane; that stretch reads EALTLSQIFV.

Belongs to the peptidase A22A family. Homodimer. Component of the gamma-secretase complex, a complex composed of a presenilin homodimer, nicastrin, aph1 and pen2.

Its subcellular location is the endoplasmic reticulum membrane. It is found in the golgi apparatus membrane. Probable catalytic subunit of the gamma-secretase complex, an endoprotease complex that catalyzes the intramembrane cleavage of integral membrane proteins such as Notch receptors. Requires the other members of the gamma-secretase complex to have a protease activity. In Dictyostelium discoideum (Social amoeba), this protein is Presenilin-B (psenB).